The sequence spans 507 residues: Probable cytochrome P450 6a18 (507 aa).

Cys-451 provides a ligand contact to heme.

It belongs to the cytochrome P450 family. Heme serves as cofactor.

The protein localises to the endoplasmic reticulum membrane. It is found in the microsome membrane. Functionally, may be involved in the metabolism of insect hormones and in the breakdown of synthetic insecticides. The protein is Probable cytochrome P450 6a18 (Cyp6a18) of Drosophila melanogaster (Fruit fly).